Reading from the N-terminus, the 158-residue chain is Crossover junction endodeoxyribonuclease RuvC (158 aa).

Active-site residues include Asp-7, Glu-67, and Asp-140. Positions 7, 67, and 140 each coordinate Mg(2+).

Belongs to the RuvC family. As to quaternary structure, homodimer which binds Holliday junction (HJ) DNA. The HJ becomes 2-fold symmetrical on binding to RuvC with unstacked arms; it has a different conformation from HJ DNA in complex with RuvA. In the full resolvosome a probable DNA-RuvA(4)-RuvB(12)-RuvC(2) complex forms which resolves the HJ. It depends on Mg(2+) as a cofactor.

Its subcellular location is the cytoplasm. The enzyme catalyses Endonucleolytic cleavage at a junction such as a reciprocal single-stranded crossover between two homologous DNA duplexes (Holliday junction).. The RuvA-RuvB-RuvC complex processes Holliday junction (HJ) DNA during genetic recombination and DNA repair. Endonuclease that resolves HJ intermediates. Cleaves cruciform DNA by making single-stranded nicks across the HJ at symmetrical positions within the homologous arms, yielding a 5'-phosphate and a 3'-hydroxyl group; requires a central core of homology in the junction. The consensus cleavage sequence is 5'-(A/T)TT(C/G)-3'. Cleavage occurs on the 3'-side of the TT dinucleotide at the point of strand exchange. HJ branch migration catalyzed by RuvA-RuvB allows RuvC to scan DNA until it finds its consensus sequence, where it cleaves and resolves the cruciform DNA. This Dictyoglomus thermophilum (strain ATCC 35947 / DSM 3960 / H-6-12) protein is Crossover junction endodeoxyribonuclease RuvC.